Here is a 129-residue protein sequence, read N- to C-terminus: Lysozyme C, milk isozyme (129 aa).

Residues lysine 1–leucine 129 enclose the C-type lysozyme domain. 4 cysteine pairs are disulfide-bonded: cysteine 6-cysteine 127, cysteine 30-cysteine 115, cysteine 65-cysteine 80, and cysteine 76-cysteine 94. Active-site residues include glutamate 35 and aspartate 53. Lysine 82, aspartate 85, asparagine 87, aspartate 90, and aspartate 91 together coordinate Ca(2+).

Belongs to the glycosyl hydrolase 22 family. Monomer. Requires Ca(2+) as cofactor.

It carries out the reaction Hydrolysis of (1-&gt;4)-beta-linkages between N-acetylmuramic acid and N-acetyl-D-glucosamine residues in a peptidoglycan and between N-acetyl-D-glucosamine residues in chitodextrins.. Lysozymes have primarily a bacteriolytic function; those in tissues and body fluids are associated with the monocyte-macrophage system and enhance the activity of immunoagents. This chain is Lysozyme C, milk isozyme (LYZ), found in Equus caballus (Horse).